Here is a 327-residue protein sequence, read N- to C-terminus: Serpentine receptor class alpha-12 (327 aa).

Topologically, residues 1 to 18 (MGCASEIQAEIFTSFGQL) are extracellular. A helical membrane pass occupies residues 19-39 (FYASFQTILFLATIIGSLLAI). The Cytoplasmic portion of the chain corresponds to 40 to 53 (FELCKKTTVPDSTR). The helical transmembrane segment at 54–74 (VLLIGSLFFANAHEFAYFTAP) threads the bilayer. Over 75-98 (LKVFQLNIFNTNTSCYPLISTRDC) the chain is Extracellular. A helical membrane pass occupies residues 99 to 119 (IPTTTVLAMGISGNMLIQSAL). Residues 120–138 (SIDRLLATIFPFSYSRMRA) are Cytoplasmic-facing. The helical transmembrane segment at 139–159 (LPGFVLLIMVLIPAMFTYSWI) threads the bilayer. Residues 160–185 (RLDIVLDDYQMFCSQWSANISTRANT) lie on the Extracellular side of the membrane. The chain crosses the membrane as a helical span at residues 186–206 (FLEICSYLTVAHIIINCLIIL). The Cytoplasmic portion of the chain corresponds to 207–234 (RNRAIEKRCRFDVTQRYLTSENLKTTQA). The chain crosses the membrane as a helical span at residues 235–255 (ICYLSIAQFLAMFMYSGGVLL). Residues 256–270 (MRKNRENIPTLIYFN) lie on the Extracellular side of the membrane. Residues 271–291 (VIVWVYAPPYACVSLAPLILF) form a helical membrane-spanning segment. At 292 to 327 (SLWNLKKQRHIQIKSVQSAQKETQDDYIRKLQKSWK) the chain is on the cytoplasmic side.

The protein belongs to the nematode receptor-like protein sra family. Expressed in neurons RIF/RIG and PVT.

The protein resides in the membrane. This Caenorhabditis elegans protein is Serpentine receptor class alpha-12 (sra-12).